A 141-amino-acid polypeptide reads, in one-letter code: Large ribosomal subunit protein uL11B/uL11C (141 aa).

It belongs to the universal ribosomal protein uL11 family. As to quaternary structure, part of the ribosomal stalk of the 50S ribosomal subunit. Interacts with L10 and the large rRNA to form the base of the stalk. L10 forms an elongated spine to which L12 dimers bind in a sequential fashion forming a multimeric L10(L12)X complex. Post-translationally, one or more lysine residues are methylated.

Forms part of the ribosomal stalk which helps the ribosome interact with GTP-bound translation factors. This chain is Large ribosomal subunit protein uL11B/uL11C, found in Bacillus cereus (strain ATCC 14579 / DSM 31 / CCUG 7414 / JCM 2152 / NBRC 15305 / NCIMB 9373 / NCTC 2599 / NRRL B-3711).